A 229-amino-acid polypeptide reads, in one-letter code: MVHPYLFLNFFRELLHPLGFSEAGADAVVYTWLIMIGLVVLSIAATKRLQAVPSGLQNFMEVIVGGIENMLVETMGEHGKPFFPLVATLALFILVSNLIGLVPGFFPPTANINTTAACAVVVFVTTHIVGVKHHGAGYIKHFLGPIAWLAPMMFFIEVIGHLSRVISLTLRLFGNMNGHELVLIIFFGLAPFIVPLPMMLMGVLVSFIQAFVFMLLAMIYIQGSLEHAH.

The next 6 membrane-spanning stretches (helical) occupy residues 25–45, 82–102, 104–124, 142–162, 181–201, and 202–222; these read ADAVVYTWLIMIGLVVLSIAA, FFPLVATLALFILVSNLIGLV, GFFPPTANINTTAACAVVVFV, FLGPIAWLAPMMFFIEVIGHL, LVLIIFFGLAPFIVPLPMMLM, and GVLVSFIQAFVFMLLAMIYIQ.

Belongs to the ATPase A chain family. In terms of assembly, F-type ATPases have 2 components, CF(1) - the catalytic core - and CF(0) - the membrane proton channel. CF(1) has five subunits: alpha(3), beta(3), gamma(1), delta(1), epsilon(1). CF(0) has three main subunits: a(1), b(2) and c(9-12). The alpha and beta chains form an alternating ring which encloses part of the gamma chain. CF(1) is attached to CF(0) by a central stalk formed by the gamma and epsilon chains, while a peripheral stalk is formed by the delta and b chains.

The protein localises to the cell inner membrane. Its function is as follows. Key component of the proton channel; it plays a direct role in the translocation of protons across the membrane. This chain is ATP synthase subunit a, found in Citrifermentans bemidjiense (strain ATCC BAA-1014 / DSM 16622 / JCM 12645 / Bem) (Geobacter bemidjiensis).